Consider the following 324-residue polypeptide: Adenosine kinase (324 aa).

Substrate is bound by residues S8, D12, S36, G48, N52, F102, F116, and 172–173 (QQ). Residues N195, 223–228 (TLGPKG), and G256 contribute to the ATP site. D257 is a substrate binding site. D257 (proton acceptor) is an active-site residue.

The protein belongs to the carbohydrate kinase PfkB family. Homodimer. Mg(2+) serves as cofactor.

It carries out the reaction adenosine + ATP = AMP + ADP + H(+). It catalyses the reaction adenosine + GTP = GDP + AMP + H(+). The enzyme catalyses dGTP + adenosine = dGDP + AMP + H(+). It functions in the pathway purine metabolism; AMP biosynthesis via salvage pathway; AMP from adenosine: step 1/1. Catalyzes the phosphorylation of adenosine to adenosine monophosphate (AMP). Prefers dGTP and GTP to ATP as phosphate donors in vitro. The protein is Adenosine kinase (adoK) of Mycobacterium bovis (strain ATCC BAA-935 / AF2122/97).